Consider the following 360-residue polypeptide: Phospho-N-acetylmuramoyl-pentapeptide-transferase (360 aa).

Helical transmembrane passes span 18–38 (VFSY…FISL), 73–93 (TMGG…WADL), 94–114 (SNIY…VGFV), 134–154 (YFWQ…IAQG), 168–188 (LLPQ…VGTS), 199–219 (GLAI…AYVT), 239–259 (LVIV…FNTY), 263–283 (VFMG…IAIL), 288–308 (LVLF…ILQV), and 338–358 (VIVR…ATLK).

The protein belongs to the glycosyltransferase 4 family. MraY subfamily. It depends on Mg(2+) as a cofactor.

It localises to the cell inner membrane. The catalysed reaction is UDP-N-acetyl-alpha-D-muramoyl-L-alanyl-gamma-D-glutamyl-meso-2,6-diaminopimeloyl-D-alanyl-D-alanine + di-trans,octa-cis-undecaprenyl phosphate = di-trans,octa-cis-undecaprenyl diphospho-N-acetyl-alpha-D-muramoyl-L-alanyl-D-glutamyl-meso-2,6-diaminopimeloyl-D-alanyl-D-alanine + UMP. The protein operates within cell wall biogenesis; peptidoglycan biosynthesis. Its function is as follows. Catalyzes the initial step of the lipid cycle reactions in the biosynthesis of the cell wall peptidoglycan: transfers peptidoglycan precursor phospho-MurNAc-pentapeptide from UDP-MurNAc-pentapeptide onto the lipid carrier undecaprenyl phosphate, yielding undecaprenyl-pyrophosphoryl-MurNAc-pentapeptide, known as lipid I. In Colwellia psychrerythraea (strain 34H / ATCC BAA-681) (Vibrio psychroerythus), this protein is Phospho-N-acetylmuramoyl-pentapeptide-transferase.